A 374-amino-acid polypeptide reads, in one-letter code: Actin-related protein 2/3 complex subunit 2B (374 aa).

This sequence belongs to the ARPC2 family. In terms of assembly, component of the Arp2/3 complex composed of ARP2, ARP3, ARPC1/p41-ARC, ARPC2/p34-ARC, ARPC3/p21-ARC, ARPC4/p20-ARC and ARPC5/p16-ARC. As to expression, expressed at low levels in all tissues with a relatively highest expression in inflorescences.

Its subcellular location is the cytoplasm. The protein localises to the cytoskeleton. The protein resides in the cell projection. In terms of biological role, functions as actin-binding component of the Arp2/3 complex which is involved in regulation of actin polymerization and together with an activating nucleation-promoting factor (NPF) mediates the formation of branched actin networks. Seems to contact the mother actin filament. Arp2/3 complex plays a critical role in the control of cell morphogenesis via the modulation of cell polarity development. The sequence is that of Actin-related protein 2/3 complex subunit 2B (ARPC2B) from Arabidopsis thaliana (Mouse-ear cress).